A 172-amino-acid polypeptide reads, in one-letter code: MGRRKIKMEMVQDMNTRQVTFSKRRTGLFKKASELATLCNAELGIVVFSPGGKPFSYGKPNLDSVAERFMREYDDSDSGDEEKSGNYRPKLKRLSERLDLLNQEVEAEKERGEKSQEKLESAGDERFKESIETLTLDELNEYKDRLQTVHGRIEGQVNHLQASSCLMLLSRK.

The MADS-box domain occupies 1 to 61 (MGRRKIKMEM…GKPFSYGKPN (61 aa)). Residues 86–123 (NYRPKLKRLSERLDLLNQEVEAEKERGEKSQEKLESAG) adopt a coiled-coil conformation. The segment at 106-125 (EAEKERGEKSQEKLESAGDE) is disordered.

In terms of tissue distribution, expressed in pollen.

The protein localises to the nucleus. Its function is as follows. Probable transcription factor. This Arabidopsis thaliana (Mouse-ear cress) protein is Agamous-like MADS-box protein AGL29.